Reading from the N-terminus, the 288-residue chain is Glucose uptake protein GlcU (288 aa).

Transmembrane regions (helical) follow at residues 4 to 26, 33 to 51, 56 to 75, 82 to 104, 114 to 136, 148 to 170, 180 to 197, 206 to 225, 230 to 252, and 264 to 283; these read LIALLPALFWGSVVLINVLVGGG, GTTFGALIIGIILLLTGNA, LTIIIVGLISGAFWALGQGY, LIGVSKTMPISTGLQLVGTTLFS, GVQVTLGLVAMVLLVIGIALTSI, NFGKAMPILLISTVGYVVYVVVA, ALFFQSIGMAIGGLILSA, TLWNLIPGIVWGIGNLFMFY, VGVATSFSFSQLLVIVSTLGGIF, and IGIWAGIVLIVIAPLYSEIL.

The protein belongs to the GRP transporter (TC 2.A.7.5) family.

It is found in the cell membrane. Involved in the uptake of glucose. The polypeptide is Glucose uptake protein GlcU (glcU) (Staphylococcus xylosus).